A 593-amino-acid polypeptide reads, in one-letter code: NADH-quinone oxidoreductase subunit C/D (593 aa).

An NADH dehydrogenase I subunit C region spans residues 1-184 (MTADSALYIP…DPYSLSAAKQ (184 aa)). The NADH dehydrogenase I subunit D stretch occupies residues 208 to 593 (DYMFLNLGPN…IDFVMADVDR (386 aa)).

In the N-terminal section; belongs to the complex I 30 kDa subunit family. The protein in the C-terminal section; belongs to the complex I 49 kDa subunit family. NDH-1 is composed of 13 different subunits. Subunits NuoB, CD, E, F, and G constitute the peripheral sector of the complex.

The protein resides in the cell inner membrane. It carries out the reaction a quinone + NADH + 5 H(+)(in) = a quinol + NAD(+) + 4 H(+)(out). Functionally, NDH-1 shuttles electrons from NADH, via FMN and iron-sulfur (Fe-S) centers, to quinones in the respiratory chain. The immediate electron acceptor for the enzyme in this species is believed to be ubiquinone. Couples the redox reaction to proton translocation (for every two electrons transferred, four hydrogen ions are translocated across the cytoplasmic membrane), and thus conserves the redox energy in a proton gradient. The polypeptide is NADH-quinone oxidoreductase subunit C/D (Pseudomonas aeruginosa (strain UCBPP-PA14)).